The primary structure comprises 125 residues: Snaclec alboaggregin-A subunit beta (125 aa).

In terms of domain architecture, C-type lectin spans 1-125; the sequence is GFDCPFGWSS…TRYPVCKFXG (125 aa). Intrachain disulfides connect C4/C15, C32/C121, and C98/C113.

This sequence belongs to the snaclec family. In terms of assembly, heterotetramer of the subunits alpha, alpha', beta and beta'; disulfide-linked. Expressed by the venom gland.

Its subcellular location is the secreted. Potent platelet activator that aggregates platelets via both GPIbalpha (GP1BA) and GPVI (GP6). Induces a tyrosine phosphorylation profile in platelets that resembles this produced by collagen, involving the time dependent tyrosine phosphorylation of Fc receptor gamma chain (FCGR1A), phospholipase Cgamma2 (PLCG2), and LAT. This is Snaclec alboaggregin-A subunit beta from Trimeresurus albolabris (White-lipped pit viper).